Here is a 130-residue protein sequence, read N- to C-terminus: Protein ApaG (130 aa).

The ApaG domain maps to 3 to 127 (KAETRGIMVT…FSLDSPHLRR (125 aa)).

The polypeptide is Protein ApaG (Methylorubrum extorquens (strain CM4 / NCIMB 13688) (Methylobacterium extorquens)).